Consider the following 115-residue polypeptide: MEEEMIIGISTSFSAAHSIPGHKKCGKVHGHNFKVEVEISGKVKENGMVMDFFDLKRIVNEVVAKFDHTLLNEQIEIPTSENICLRIFSELAEKGLNVRRVRVAENEDKWAEIRR.

Position 17 (histidine 17) interacts with Zn(2+). Cysteine 25 serves as the catalytic Proton acceptor. Zn(2+) is bound by residues histidine 29 and histidine 31. Active-site charge relay system residues include histidine 68 and glutamate 105.

This sequence belongs to the PTPS family. QueD subfamily. It depends on Zn(2+) as a cofactor.

It catalyses the reaction 7,8-dihydroneopterin 3'-triphosphate + H2O = 6-carboxy-5,6,7,8-tetrahydropterin + triphosphate + acetaldehyde + 2 H(+). It functions in the pathway purine metabolism; 7-cyano-7-deazaguanine biosynthesis. In terms of biological role, catalyzes the conversion of 7,8-dihydroneopterin triphosphate (H2NTP) to 6-carboxy-5,6,7,8-tetrahydropterin (CPH4) and acetaldehyde. The polypeptide is Putative 6-carboxy-5,6,7,8-tetrahydropterin synthase (queD) (Archaeoglobus fulgidus (strain ATCC 49558 / DSM 4304 / JCM 9628 / NBRC 100126 / VC-16)).